Here is a 214-residue protein sequence, read N- to C-terminus: Small ribosomal subunit protein uS3 (214 aa).

The 69-residue stretch at 39-107 (IRAYLLKKPA…EVWVAVEEVK (69 aa)) folds into the KH type-2 domain.

It belongs to the universal ribosomal protein uS3 family. Part of the 30S ribosomal subunit. Forms a tight complex with proteins S10 and S14.

Binds the lower part of the 30S subunit head. Binds mRNA in the 70S ribosome, positioning it for translation. This Protochlamydia amoebophila (strain UWE25) protein is Small ribosomal subunit protein uS3.